A 315-amino-acid polypeptide reads, in one-letter code: DNA-directed RNA polymerase subunit alpha (315 aa).

The interval 1 to 228 (MIEIEKPKIE…EHLNLFIDLS (228 aa)) is alpha N-terminal domain (alpha-NTD). An alpha C-terminal domain (alpha-CTD) region spans residues 245–315 (KEKVLEMTIE…LGLSLAPSED (71 aa)).

This sequence belongs to the RNA polymerase alpha chain family. In terms of assembly, homodimer. The RNAP catalytic core consists of 2 alpha, 1 beta, 1 beta' and 1 omega subunit. When a sigma factor is associated with the core the holoenzyme is formed, which can initiate transcription.

The catalysed reaction is RNA(n) + a ribonucleoside 5'-triphosphate = RNA(n+1) + diphosphate. DNA-dependent RNA polymerase catalyzes the transcription of DNA into RNA using the four ribonucleoside triphosphates as substrates. The polypeptide is DNA-directed RNA polymerase subunit alpha (Acetivibrio thermocellus (strain ATCC 27405 / DSM 1237 / JCM 9322 / NBRC 103400 / NCIMB 10682 / NRRL B-4536 / VPI 7372) (Clostridium thermocellum)).